Consider the following 259-residue polypeptide: Phosphate import ATP-binding protein PstB 1 (259 aa).

The region spanning 13 to 254 (IQVRGLEFFY…PSKTQTEDYI (242 aa)) is the ABC transporter domain. 45-52 (GPSGCGKS) is a binding site for ATP.

Belongs to the ABC transporter superfamily. Phosphate importer (TC 3.A.1.7) family. As to quaternary structure, the complex is composed of two ATP-binding proteins (PstB), two transmembrane proteins (PstC and PstA) and a solute-binding protein (PstS).

It localises to the cell inner membrane. The catalysed reaction is phosphate(out) + ATP + H2O = ADP + 2 phosphate(in) + H(+). Functionally, part of the ABC transporter complex PstSACB involved in phosphate import. Responsible for energy coupling to the transport system. In Pseudomonas syringae pv. tomato (strain ATCC BAA-871 / DC3000), this protein is Phosphate import ATP-binding protein PstB 1.